The sequence spans 212 residues: MDGRVVLIHALLTAVCSAAVGKFGRDGPHGEALHNEVLLHEGGGVASVSATAPLLGGIVEKEGGGAASGDALSELPRVAFLSKPQGPVTPKKKGNGNKRRKGKGLGKKRDPCLRKYKDFCIHGECKYIRELGAPSCICQPGYHGERCHGLLLPVEHPPSTYDHTTALAVVAVVLSSLCLVIITALLMFRCHKRGVYDVENEEKIKLGITVNH.

The first 18 residues, 1 to 18, serve as a signal peptide directing secretion; it reads MDGRVVLIHALLTAVCSA. Topologically, residues 19–167 are extracellular; it reads AVGKFGRDGP…PSTYDHTTAL (149 aa). Residues 82–108 are disordered; it reads SKPQGPVTPKKKGNGNKRRKGKGLGKK. Positions 90–106 are enriched in basic residues; that stretch reads PKKKGNGNKRRKGKGLG. In terms of domain architecture, EGF-like spans 108-148; sequence KRDPCLRKYKDFCIHGECKYIRELGAPSCICQPGYHGERCH. 3 disulfide bridges follow: Cys112/Cys125, Cys120/Cys136, and Cys138/Cys147. Residues 153 to 212 constitute a propeptide, C-terminal; the sequence is PVEHPPSTYDHTTALAVVAVVLSSLCLVIITALLMFRCHKRGVYDVENEEKIKLGITVNH. Residues 168-188 form a helical membrane-spanning segment; that stretch reads AVVAVVLSSLCLVIITALLMF. Residues 189–212 are Cytoplasmic-facing; sequence RCHKRGVYDVENEEKIKLGITVNH.

Interacts with CNIH2.

Its subcellular location is the secreted. The protein resides in the extracellular space. The protein localises to the cell membrane. Its function is as follows. May be involved in macrophage-mediated cellular proliferation. It is mitogenic for fibroblasts and smooth muscle but not endothelial cells. It is able to bind EGF receptor/EGFR with higher affinity than EGF itself and is a far more potent mitogen for smooth muscle cells than EGF. Plays an important role in the proper development of cranial nerves by inhibiting the migration of the cranial neural crest cells (NCCs) into the odd-numbered neuromeres (r3 and r5) of the hindbrain Plays a role in mediating v-Jun-induced oncogenic transformation. The protein is Proheparin-binding EGF-like growth factor (HBEGF) of Gallus gallus (Chicken).